We begin with the raw amino-acid sequence, 165 residues long: Peptide methionine sulfoxide reductase MsrA (165 aa).

Cysteine 10 is a catalytic residue.

It belongs to the MsrA Met sulfoxide reductase family.

It carries out the reaction L-methionyl-[protein] + [thioredoxin]-disulfide + H2O = L-methionyl-(S)-S-oxide-[protein] + [thioredoxin]-dithiol. The enzyme catalyses [thioredoxin]-disulfide + L-methionine + H2O = L-methionine (S)-S-oxide + [thioredoxin]-dithiol. In terms of biological role, has an important function as a repair enzyme for proteins that have been inactivated by oxidation. Catalyzes the reversible oxidation-reduction of methionine sulfoxide in proteins to methionine. The chain is Peptide methionine sulfoxide reductase MsrA from Campylobacter jejuni subsp. jejuni serotype O:6 (strain 81116 / NCTC 11828).